Consider the following 116-residue polypeptide: Spermadhesin Z13 (116 aa).

Intrachain disulfides connect C14–C35 and C58–C79. One can recognise a CUB domain in the interval 14–115 (CGDLYGEEYG…PDFFLIFRRV (102 aa)).

This sequence belongs to the spermadhesin family. As to quaternary structure, homodimer; disulfide-linked. In terms of tissue distribution, seminal plasma.

The protein localises to the secreted. Its function is as follows. May be involved in the fertilization process. This Bos taurus (Bovine) protein is Spermadhesin Z13.